Consider the following 367-residue polypeptide: Probable protein phosphatase 2C 67 (367 aa).

The segment at 1-79 (MAHQKREATS…DEKAATNSNV (79 aa)) is disordered. A compositionally biased stretch (basic and acidic residues) spans 31-46 (AEKEHILTSDASHETN). The 275-residue stretch at 91-365 (EADAAEDKGC…DNCTAVLIVF (275 aa)) folds into the PPM-type phosphatase domain. Mn(2+)-binding residues include Asp131, Gly132, Asp312, and Asp356.

This sequence belongs to the PP2C family. It depends on Mg(2+) as a cofactor. The cofactor is Mn(2+).

It catalyses the reaction O-phospho-L-seryl-[protein] + H2O = L-seryl-[protein] + phosphate. The enzyme catalyses O-phospho-L-threonyl-[protein] + H2O = L-threonyl-[protein] + phosphate. The chain is Probable protein phosphatase 2C 67 from Oryza sativa subsp. japonica (Rice).